The chain runs to 328 residues: DNA-directed RNA polymerase subunit alpha (328 aa).

The alpha N-terminal domain (alpha-NTD) stretch occupies residues 1–232 (MSTQGFLKPR…DQISVFAALE (232 aa)). Positions 248–328 (IDPVLLRPVD…NWPPLGLERP (81 aa)) are alpha C-terminal domain (alpha-CTD).

This sequence belongs to the RNA polymerase alpha chain family. In terms of assembly, homodimer. The RNAP catalytic core consists of 2 alpha, 1 beta, 1 beta' and 1 omega subunit. When a sigma factor is associated with the core the holoenzyme is formed, which can initiate transcription.

The catalysed reaction is RNA(n) + a ribonucleoside 5'-triphosphate = RNA(n+1) + diphosphate. Functionally, DNA-dependent RNA polymerase catalyzes the transcription of DNA into RNA using the four ribonucleoside triphosphates as substrates. This chain is DNA-directed RNA polymerase subunit alpha, found in Bordetella petrii (strain ATCC BAA-461 / DSM 12804 / CCUG 43448).